Reading from the N-terminus, the 895-residue chain is Zyg eleven-related protein 1 (895 aa).

Disordered stretches follow at residues 58–78 (HGPAPVEHLGPPTDEPRPDQG) and 195–221 (RGQMERDGLRSPLSPSSQPSSIQSDHQ). Residues 205–220 (SPLSPSSQPSSIQSDH) are compositionally biased toward low complexity.

As to quaternary structure, interacts with elc-1. Part of an E3 ubiquitin ligase complex including zer-11, cul-2 and elc-1.

Acts as a target recruitment subunit in the E3 ubiquitin ligase complex zer-1-cul-2-elc-1. This is Zyg eleven-related protein 1 (zer-1) from Caenorhabditis elegans.